The chain runs to 843 residues: Toll-like receptor 4 (843 aa).

A signal peptide spans 1–23; the sequence is MMPPTRLAGTLIPAMAFLSCLRP. Residues 24 to 54 enclose the LRRNT domain; that stretch reads ESWDPCVQVVPNTTYQCMDLNLYKIPENIPT. Over 24–633 the chain is Extracellular; that stretch reads ESWDPCVQVV…FNNATCQISK (610 aa). An intrachain disulfide couples Cys29 to Cys40. Asn35 is a glycosylation site (N-linked (GlcNAc...) asparagine). LRR repeat units follow at residues 55 to 76, 79 to 100, 103 to 124, 127 to 148, 151 to 172, 176 to 197, 205 to 225, and 227 to 247; these read STKE…SFSN, ELQV…AYQG, HLST…AFSG, SLQT…PIGH, TLKE…EYFS, NLEH…DLRV, NLSL…AFKE, and KLHK…KSCI. 2 N-linked (GlcNAc...) asparagine glycosylation sites follow: Asn189 and Asn205. N-linked (GlcNAc...) asparagine glycans are attached at residues Asn282 and Asn295. LRR repeat units lie at residues 353–374, 375–398, 401–423, 424–445, 449–459, 473–496, 498–519, 522–543, and 546–569; these read SLKR…VKLP, SLEF…ADLK, RLKH…MGLE, QLEH…PVFL, NLRYLDISYTN, SLQV…FREM, NLTT…AFCL, RLRV…PYKP, and SLQI…QHFP. Residues Cys391 and Cys392 are joined by a disulfide bond. Residues Asn498 and Asn527 are each glycosylated (N-linked (GlcNAc...) asparagine). Asn576 is a glycosylation site (N-linked (GlcNAc...) asparagine). Residues 580-631 enclose the LRRCT domain; it reads NDFACVCEYQSFLQWVKDQRQLLVEVEHLVCAIPLQMRGMPVLGFNNATCQI. Cystine bridges form between Cys584/Cys610 and Cys586/Cys629. N-linked (GlcNAc...) asparagine glycosylation occurs at Asn626. The helical transmembrane segment at 634–654 threads the bilayer; it reads TIVGGSVFSILMVSVIAVLVY. Residues 655–843 are Cytoplasmic-facing; it reads KFYFHLMLLA…SRQHDAETST (189 aa). One can recognise a TIR domain in the interval 674 to 817; that stretch reads SIYDAFVIYS…IFWRRLRKAL (144 aa). The disordered stretch occupies residues 824-843; sequence SPAGTADAAESRQHDAETST. A compositionally biased stretch (basic and acidic residues) spans 832 to 843; the sequence is AESRQHDAETST.

It belongs to the Toll-like receptor family. In terms of assembly, belongs to the lipopolysaccharide (LPS) receptor, a multi-protein complex containing at least CD14, LY96 and TLR4. Binding to bacterial LPS leads to homodimerization. Interacts with LY96 via the extracellular domain. Interacts with MYD88 and TIRAP via their respective TIR domains. Interacts with NOX4. Interacts with CNPY3 and HSP90B1; this interaction is required for proper folding in the endoplasmic reticulum. Interacts with MAP3K21; this interaction leads to negative regulation of TLR4 signaling. Interacts with CD36, following CD36 stimulation by oxLDL or amyloid-beta 42, and forms a heterodimer with TLR6. The trimeric complex is internalized and triggers inflammatory response. LYN kinase activity facilitates TLR4-TLR6 heterodimerization and signal initiation. Interacts with TICAM1 in response to LPS in a WDFY1-dependent manner. Interacts with WDFY1 in response to LPS. Interacts with SMPDL3B. Interacts with CEACAM1; upon lipopolysaccharide stimulation, forms a complex including TLR4 and the phosphorylated form of SYK and CEACAM1, which in turn, recruits PTPN6 that dephosphorylates SYK, reducing the production of reactive oxygen species (ROS) and lysosome disruption, which in turn, reduces the activity of the inflammasome. Interacts with RFTN1; the interaction occurs in response to lipopolysaccharide stimulation. Interacts with SCIMP; the interaction occurs in response to lipopolysaccharide stimulation and is enhanced by phosphorylation of SCIMP by LYN. This interaction facilitates the phosphorylation of TLR4 by LYN which elicits a selective cytokine response in macrophages. Interacts with TRAF3IP3. Interacts with TREM1; this interaction enhances TLR4-mediated inflammatory response. Interacts with ZG16B/PAUF. Interacts with CD82; this interaction inhibits TLR4-mediated signaling pathway. Phosphorylated on tyrosine residues by LYN after binding lipopolysaccharide. In terms of processing, ubiquitinated by RNF128 via 'Lys-28'-linked polyubiquitin chains, leading to proteasomal degradation.

It localises to the cell membrane. It is found in the early endosome. The protein resides in the cell projection. The protein localises to the ruffle. Its function is as follows. Transmembrane receptor that functions as a pattern recognition receptor recognizing pathogen- and damage-associated molecular patterns (PAMPs and DAMPs) to induce innate immune responses via downstream signaling pathways. At the plasma membrane, cooperates with LY96 to mediate the innate immune response to bacterial lipopolysaccharide (LPS). Also involved in LPS-independent inflammatory responses triggered by free fatty acids, such as palmitate, and Ni(2+). Mechanistically, acts via MYD88, TIRAP and TRAF6, leading to NF-kappa-B activation, cytokine secretion and the inflammatory response. Alternatively, CD14-mediated TLR4 internalization via endocytosis is associated with the initiation of a MYD88-independent signaling via the TICAM1-TBK1-IRF3 axis leading to type I interferon production. In addition to the secretion of proinflammatory cytokines, initiates the activation of NLRP3 inflammasome and formation of a positive feedback loop between autophagy and NF-kappa-B signaling cascade. In complex with TLR6, promotes inflammation in monocytes/macrophages by associating with TLR6 and the receptor CD86. Upon ligand binding, such as oxLDL or amyloid-beta 42, the TLR4:TLR6 complex is internalized and triggers inflammatory response, leading to NF-kappa-B-dependent production of CXCL1, CXCL2 and CCL9 cytokines, via MYD88 signaling pathway, and CCL5 cytokine, via TICAM1 signaling pathway. In myeloid dendritic cells, vesicular stomatitis virus glycoprotein G but not LPS promotes the activation of IRF7, leading to type I IFN production in a CD14-dependent manner. The chain is Toll-like receptor 4 (TLR4) from Equus caballus (Horse).